We begin with the raw amino-acid sequence, 284 residues long: MFIISSKNMLQKAQHAGYAVPAFNIHNLETLQVVVETAAEMRSPLIVAGTPGTFSYAGMGNIVAIAGDLAREYNLPLAIHLDHHESLADIESKVMAGIRSVMIDGSHFPFEENVALVKSVVDFCHRYDTSVEAELGRLGGIEDDLVVDSKDALYTNPQQAREFVARTGIDSLAVAIGTAHGMYAAEPKLDFERLAEIRALVDIPLVLHGASGLPESDIRQAISLGVCKVNVATELKIAFSDALKEYFLQNPKANDPRHYMQPAKQAMKEVVRKVIHVCGCEGQL.

Asp-82 serves as the catalytic Proton donor. Zn(2+) is bound by residues His-83 and His-180. A dihydroxyacetone phosphate-binding site is contributed by Gly-181. Residue His-208 participates in Zn(2+) binding. Residues 209–211 (GAS) and 230–233 (NVAT) each bind dihydroxyacetone phosphate.

This sequence belongs to the class II fructose-bisphosphate aldolase family. TagBP aldolase GatY subfamily. Forms a complex with GatZ. The cofactor is Zn(2+).

The catalysed reaction is D-tagatofuranose 1,6-bisphosphate = D-glyceraldehyde 3-phosphate + dihydroxyacetone phosphate. It functions in the pathway carbohydrate metabolism; D-tagatose 6-phosphate degradation; D-glyceraldehyde 3-phosphate and glycerone phosphate from D-tagatose 6-phosphate: step 2/2. Catalytic subunit of the tagatose-1,6-bisphosphate aldolase GatYZ, which catalyzes the reversible aldol condensation of dihydroxyacetone phosphate (DHAP or glycerone-phosphate) with glyceraldehyde 3-phosphate (G3P) to produce tagatose 1,6-bisphosphate (TBP). Requires GatZ subunit for full activity and stability. Is involved in the catabolism of galactitol. The polypeptide is D-tagatose-1,6-bisphosphate aldolase subunit GatY (Salmonella typhi).